Reading from the N-terminus, the 303-residue chain is Cyclin-dependent kinase 4 (303 aa).

An N-acetylalanine modification is found at A2. Positions 6 to 295 (YEPVAEIGVG…AFRALQHSYL (290 aa)) constitute a Protein kinase domain. ATP-binding positions include 12-20 (IGVGAYGTV) and K35. The interval 50–56 (PISTVRE) is required for binding D-type cyclins. D140 serves as the catalytic Proton acceptor. The residue at position 172 (T172) is a Phosphothreonine; by CAK.

This sequence belongs to the protein kinase superfamily. CMGC Ser/Thr protein kinase family. CDC2/CDKX subfamily. In terms of assembly, component of the D-CDK4 complex, composed of CDK4 and some D-type G1 cyclin (CCND1, CCND2 or CCND3). Interacts directly in the complex with CCND1, CCND2 or CCND3. Interacts with SEI1 and ZNF655. Forms a ternary complex, cyclin D-CDK4-CDKN1B, involved in modulating CDK4 enzymatic activity. Interacts directly with CDKN1B (phosphorylated on 'Tyr-88' and 'Tyr-89'); the interaction allows assembly of the cyclin D-CDK4 complex, Thr-172 phosphorylation, nuclear translocation and enhances the cyclin D-CDK4 complex activity. CDK4 activity is either inhibited or enhanced depending on stoichiometry of complex. The non-tyrosine-phosphorylated form of CDKN1B prevents T-loop phosphorylation of CDK4 producing inactive CDK4. Interacts (unphosphorylated form) with CDK2. Also forms ternary complexes with CDKN1A or CDKN2A. Interacts directly with CDKN1A (via its N-terminal); the interaction promotes the assembly of the cyclin D-CDK4 complex, its nuclear translocation and promotes the cyclin D-dependent enzyme activity of CDK4. Interacts with CCND1; the interaction is prevented with the binding of CCND1 to INSM1 during cell cycle progression. Probably forms a complex composed of chaperones HSP90 and HSP70, co-chaperones CDC37, PPP5C, TSC1 and client protein TSC2, CDK4, AKT, RAF1 and NR3C1; this complex does not contain co-chaperones STIP1/HOP and PTGES3/p23. Interacts with CEBPA (when phosphorylated). Interacts with FNIP1 and FNIP2. In terms of processing, phosphorylation at Thr-172 is required for enzymatic activity. Phosphorylated, in vitro, at this site by CCNH-CDK7, but, in vivo, appears to be phosphorylated by a proline-directed kinase. In the cyclin D-CDK4-CDKN1B complex, this phosphorylation and consequent CDK4 enzyme activity, is dependent on the tyrosine phosphorylation state of CDKN1B. Thus, in proliferating cells, CDK4 within the complex is phosphorylated on Thr-172 in the T-loop. In resting cells, phosphorylation on Thr-172 is prevented by the non-tyrosine-phosphorylated form of CDKN1B.

It is found in the cytoplasm. Its subcellular location is the nucleus. The protein resides in the nucleus membrane. It catalyses the reaction L-seryl-[protein] + ATP = O-phospho-L-seryl-[protein] + ADP + H(+). The enzyme catalyses L-threonyl-[protein] + ATP = O-phospho-L-threonyl-[protein] + ADP + H(+). Both phosphorylation at Thr-172 and binding of a D-type cyclin are necessary for enzymatic activity. Full activation of the cyclin-D-CDK4 complex appears to require other factors such as recruitment of the substrate via a substrate recruitment motif, and/or formation of the CDKN1B ternary complex. Inhibited by INK4 family members. In resting cells, the non-tyrosine-phosphorylated form of CDKN1B prevents phosphorylation at Thr-172 and inactivation, while, in proliferating cells, tyrosine phosphorylation of CDKN1B allows phosphorylation of Thr-172 of CDK4 and subsequent activation. Ser/Thr-kinase component of cyclin D-CDK4 (DC) complexes that phosphorylate and inhibit members of the retinoblastoma (RB) protein family including RB1 and regulate the cell-cycle during G(1)/S transition. Phosphorylation of RB1 allows dissociation of the transcription factor E2F from the RB/E2F complexes and the subsequent transcription of E2F target genes which are responsible for the progression through the G(1) phase. Hypophosphorylates RB1 in early G(1) phase. Cyclin D-CDK4 complexes are major integrators of various mitogenenic and antimitogenic signals. Also phosphorylates SMAD3 in a cell-cycle-dependent manner and represses its transcriptional activity. Component of the ternary complex, cyclin D/CDK4/CDKN1B, required for nuclear translocation and activity of the cyclin D-CDK4 complex. The protein is Cyclin-dependent kinase 4 (CDK4) of Sus scrofa (Pig).